The chain runs to 149 residues: Protein AIM7 (149 aa).

Residue Ser-2 is modified to N-acetylserine. One can recognise an ADF-H domain in the interval 3–147 (NLYKIGTETR…DVEELREQLE (145 aa)). The residue at position 137 (Ser-137) is a Phosphoserine.

It belongs to the actin-binding proteins ADF family. GMF subfamily.

The protein resides in the cytoplasm. Its subcellular location is the nucleus. May be involved in mitochondrial organization and biogenesis. This Saccharomyces cerevisiae (strain ATCC 204508 / S288c) (Baker's yeast) protein is Protein AIM7 (AIM7).